A 517-amino-acid polypeptide reads, in one-letter code: Sugar transport protein MST1 (517 aa).

The Cytoplasmic segment spans residues 1-25 (MAGGVIVANDGDGSAVDHGGRLTFS). The helical transmembrane segment at 26-46 (VVITCLVAASGGLIFGYDVGI) threads the bilayer. Residues 47–83 (SGGVSTMEPFLRRFFPGVVRRMAEARPGNEYCVYDSQ) are Extracellular-facing. A helical transmembrane segment spans residues 84 to 104 (ALTAFTSSLYVAGLVASLVAS). Residues 105-120 (RVTRAMGRQAVMVMGG) are Cytoplasmic-facing. A helical membrane pass occupies residues 121–141 (ALFFAGGAVTGFAVNIAMLIV). Topologically, residues 142 to 143 (GR) are extracellular. Residues 144-164 (MLLGFGVGFTNQAAPLFLAEM) form a helical membrane-spanning segment. Residues 165–170 (APTRWR) are Cytoplasmic-facing. Residues 171–191 (GSLTAGFQFFLAVGVVIATVT) traverse the membrane as a helical segment. Topologically, residues 192 to 203 (NYFASRVPWGWR) are extracellular. Residues 204-224 (LSLGLAGAPAVVIFLGALFLT) traverse the membrane as a helical segment. Residues 225-288 (DTPSSLVMRG…AARREYRPYL (64 aa)) are Cytoplasmic-facing. The helical transmembrane segment at 289 to 309 (VFAVAMPMFFQLTGVIVISFF) threads the bilayer. Residues 310–325 (SPLVFRTVGFGSNAAL) are Extracellular-facing. Residues 326 to 346 (MGNVILGAVNLVCLMLSTLVI) form a helical membrane-spanning segment. The Cytoplasmic portion of the chain corresponds to 347–352 (DRYGRK). Residues 353-373 (VLFMVGGAIMIIAQVGVAWIM) traverse the membrane as a helical segment. The Extracellular segment spans residues 374–389 (GAQVGKNGSEAMARPY). A helical transmembrane segment spans residues 390–410 (AVAVVAFTCLHTAGFGWSWGP). The Cytoplasmic segment spans residues 411–430 (LGWVIPGEIFPVDIRSAGQA). A helical membrane pass occupies residues 431 to 451 (MNVSIGLGLTFVQTQSFLAML). The Extracellular segment spans residues 452-456 (CRFRY). The chain crosses the membrane as a helical span at residues 457-477 (GTFAYYAAWVAVMTVFIAVFL). At 478–517 (PETKGVPLESMATVWARHWYWKRFAREQPKTSADEPTGTY) the chain is on the cytoplasmic side.

It belongs to the major facilitator superfamily. Sugar transporter (TC 2.A.1.1) family.

The protein localises to the membrane. In terms of biological role, mediates active uptake of hexoses by sugar:proton symport. The protein is Sugar transport protein MST1 of Oryza sativa subsp. japonica (Rice).